A 379-amino-acid polypeptide reads, in one-letter code: MQEALALFFGSESLLVGTIIPFLFVLTVVVFVHEMGHYLVARWCGIGAQAFSIGFGPELLGFTDRHGTRWKLSAIPLVGYVKFIGDESETSSPVGVNESALSEEDRKRAFHTQPVWKRAATVFAGPAFNIILTIAIFSVFFALYGRQIADPLIAGVQPGSPAAEAGFEPGDRFVSVEGEKITTFADVQRIVSGRAGDKLNFTVERDGKMVDLQAVPKIVERTDPLGNKVKLGAIGVETTEAVGNFRRIEYGPLESVGQAVIETGHIIGRTGEFFKRFAVGREDKCQLGGPVKIATMASKAASQGFDWLIQLMAMLSIGIGLLNLFPLPPLDGGHLVFYAVEAIKGSPVSGAAQEIFYRIGFLLVMGFMGFVLFNDLFAC.

Histidine 33 lines the Zn(2+) pocket. Glutamate 34 is a catalytic residue. Zn(2+) is bound at residue histidine 37. Helical transmembrane passes span leucine 39–glycine 61, valine 122–tyrosine 144, phenylalanine 305–leucine 327, and isoleucine 355–phenylalanine 377. One can recognise a PDZ domain in the interval threonine 133 to lysine 208.

Belongs to the peptidase M50B family. Zn(2+) is required as a cofactor.

The protein localises to the cell inner membrane. This chain is Putative zinc metalloprotease BMEI0829, found in Brucella melitensis biotype 1 (strain ATCC 23456 / CCUG 17765 / NCTC 10094 / 16M).